The following is a 32-amino-acid chain: Photosystem I reaction center subunit XII (32 aa).

A helical transmembrane segment spans residues 3-23; that stretch reads SISDGQIVVALISAFIIVILA.

It belongs to the PsaM family.

It is found in the plastid. The protein localises to the chloroplast thylakoid membrane. The sequence is that of Photosystem I reaction center subunit XII from Anthoceros angustus (Hornwort).